The sequence spans 231 residues: Small ribosomal subunit protein bS18c (231 aa).

Disordered regions lie at residues 1-31 (MEKS…PIES) and 95-231 (QKEE…TRKK). The span at 9-26 (IKKKRPFRKKKRSFRKRR) shows a compositional bias: basic residues. 3 stretches are compositionally biased toward basic and acidic residues: residues 95-151 (QKEE…EFQR), 159-169 (TNEKQTNEKQT), and 212-231 (TNEK…TRKK).

It belongs to the bacterial ribosomal protein bS18 family. Part of the 30S ribosomal subunit.

The protein resides in the plastid. It localises to the chloroplast. The chain is Small ribosomal subunit protein bS18c from Jasminum nudiflorum (Winter jasmine).